The following is a 426-amino-acid chain: DNA polymerase processivity factor component OPG148 (426 aa).

This sequence belongs to the orthopoxvirus OPG148 family. Interacts with the DNA polymerase catalytic subunit OPG071. Interacts with UDG/OPG116. Component of the uracil-DNA glycosylase(UDG)-OPG148-polymerase complex; OPG148 and UDG form a heterodimeric processivity factor that associates with OPG071 to form the processive polymerase holoenzyme. Interacts with OPG117.

Its function is as follows. Plays an essential role in viral DNA replication by acting as the polymerase processivity factor together with protein OPG116. Serves as a bridge which links the DNA polymerase OPG071 and the uracil DNA glycosylase. The sequence is that of DNA polymerase processivity factor component OPG148 (OPG148) from Variola virus (isolate Human/India/Ind3/1967) (VARV).